The sequence spans 173 residues: Methylated-DNA--protein-cysteine methyltransferase (173 aa).

The Nucleophile; methyl group acceptor role is filled by C143.

This sequence belongs to the MGMT family.

The protein resides in the cytoplasm. It catalyses the reaction a 6-O-methyl-2'-deoxyguanosine in DNA + L-cysteinyl-[protein] = S-methyl-L-cysteinyl-[protein] + a 2'-deoxyguanosine in DNA. The catalysed reaction is a 4-O-methyl-thymidine in DNA + L-cysteinyl-[protein] = a thymidine in DNA + S-methyl-L-cysteinyl-[protein]. In terms of biological role, involved in the cellular defense against the biological effects of O6-methylguanine (O6-MeG) and O4-methylthymine (O4-MeT) in DNA. Repairs the methylated nucleobase in DNA by stoichiometrically transferring the methyl group to a cysteine residue in the enzyme. This is a suicide reaction: the enzyme is irreversibly inactivated. The protein is Methylated-DNA--protein-cysteine methyltransferase of Pyrococcus sp. (strain NA2).